The primary structure comprises 209 residues: Dual specificity phosphatase 29 (209 aa).

The Tyrosine-protein phosphatase domain occupies 45 to 193 (HVNEVWPNLY…LRELDIKLAL (149 aa)). Position 137–144 (137–144 (NCAMGRSR)) interacts with substrate. Residue Cys-138 is the Phosphocysteine intermediate of the active site.

This sequence belongs to the protein-tyrosine phosphatase family. Non-receptor class dual specificity subfamily.

Its subcellular location is the cytoplasm. The protein resides in the nucleus. It carries out the reaction O-phospho-L-tyrosyl-[protein] + H2O = L-tyrosyl-[protein] + phosphate. The enzyme catalyses O-phospho-L-seryl-[protein] + H2O = L-seryl-[protein] + phosphate. It catalyses the reaction O-phospho-L-threonyl-[protein] + H2O = L-threonyl-[protein] + phosphate. Its function is as follows. Dual specificity phosphatase able to dephosphorylate phosphotyrosine, phosphoserine and phosphothreonine residues, with a preference for phosphotyrosine as a substrate. In terms of biological role, dual specificity phosphatase able to dephosphorylate phosphotyrosine, phosphoserine and phosphothreonine residues within the same substrate, with a preference for phosphotyrosine as a substrate. Involved in the modulation of AMPK and MAPK1/2 signaling pathway. The polypeptide is Dual specificity phosphatase 29 (dusp29) (Xenopus laevis (African clawed frog)).